We begin with the raw amino-acid sequence, 655 residues long: p-hydroxybenzoic acid efflux pump subunit AaeB (655 aa).

Helical transmembrane passes span F13–L33, W38–P58, L69–I89, L93–V113, W121–L141, E152–I172, L370–V390, F407–P427, Q431–V451, M459–F479, and F482–L502.

It belongs to the aromatic acid exporter ArAE (TC 2.A.85) family.

The protein resides in the cell inner membrane. In terms of biological role, forms an efflux pump with AaeA. Could function as a metabolic relief valve, allowing to eliminate certain compounds when they accumulate to high levels in the cell. The polypeptide is p-hydroxybenzoic acid efflux pump subunit AaeB (Escherichia coli O6:K15:H31 (strain 536 / UPEC)).